A 314-amino-acid chain; its full sequence is UDP-N-acetylenolpyruvoylglucosamine reductase (314 aa).

Positions arginine 31–lysine 208 constitute an FAD-binding PCMH-type domain. The active site involves arginine 187. Serine 237 (proton donor) is an active-site residue. Glutamate 307 is a catalytic residue.

The protein belongs to the MurB family. The cofactor is FAD.

It is found in the cytoplasm. The enzyme catalyses UDP-N-acetyl-alpha-D-muramate + NADP(+) = UDP-N-acetyl-3-O-(1-carboxyvinyl)-alpha-D-glucosamine + NADPH + H(+). It participates in cell wall biogenesis; peptidoglycan biosynthesis. In terms of biological role, cell wall formation. The polypeptide is UDP-N-acetylenolpyruvoylglucosamine reductase (Agathobacter rectalis (strain ATCC 33656 / DSM 3377 / JCM 17463 / KCTC 5835 / VPI 0990) (Eubacterium rectale)).